The primary structure comprises 250 residues: UDP-2,3-diacylglucosamine hydrolase (250 aa).

5 residues coordinate Mn(2+): Asp8, His10, Asp41, Asn79, and His115. A substrate-binding site is contributed by 79–80; that stretch reads NH. Residues Asp123, Thr165, Lys168, and His196 each coordinate substrate. His196 and His198 together coordinate Mn(2+).

This sequence belongs to the LpxH family. Mn(2+) serves as cofactor.

The protein localises to the cell inner membrane. It catalyses the reaction UDP-2-N,3-O-bis[(3R)-3-hydroxytetradecanoyl]-alpha-D-glucosamine + H2O = 2-N,3-O-bis[(3R)-3-hydroxytetradecanoyl]-alpha-D-glucosaminyl 1-phosphate + UMP + 2 H(+). Its pathway is glycolipid biosynthesis; lipid IV(A) biosynthesis; lipid IV(A) from (3R)-3-hydroxytetradecanoyl-[acyl-carrier-protein] and UDP-N-acetyl-alpha-D-glucosamine: step 4/6. Hydrolyzes the pyrophosphate bond of UDP-2,3-diacylglucosamine to yield 2,3-diacylglucosamine 1-phosphate (lipid X) and UMP by catalyzing the attack of water at the alpha-P atom. Involved in the biosynthesis of lipid A, a phosphorylated glycolipid that anchors the lipopolysaccharide to the outer membrane of the cell. This Blochmanniella pennsylvanica (strain BPEN) protein is UDP-2,3-diacylglucosamine hydrolase.